Reading from the N-terminus, the 248-residue chain is UPF0246 protein lp_0089 (248 aa).

The protein belongs to the UPF0246 family.

In Lactiplantibacillus plantarum (strain ATCC BAA-793 / NCIMB 8826 / WCFS1) (Lactobacillus plantarum), this protein is UPF0246 protein lp_0089.